Here is a 485-residue protein sequence, read N- to C-terminus: Ras-like GTPase YcjX (485 aa).

The Walker A motif signature appears at 33 to 40 (GLSGAGKT). Residues serine 35, glycine 36, glycine 38, lysine 39, threonine 40, alanine 41, tryptophan 110, serine 113, threonine 114, arginine 115, lysine 355, aspartate 357, and histidine 358 each coordinate GTP. The GDP site is built by glycine 36, glycine 38, lysine 39, threonine 40, alanine 41, tryptophan 110, serine 113, and threonine 114. Lysine 355, aspartate 357, histidine 358, serine 395, alanine 396, and isoleucine 397 together coordinate GDP. GTP is bound at residue isoleucine 397.

As to quaternary structure, monomer in solution. Requires Mg(2+) as cofactor.

The catalysed reaction is GTP + H2O = GDP + phosphate + H(+). Alternates between an inactive form bound to GDP and an active form bound to GTP. Likely activated by a guanine nucleotide-exchange factor (GEF). Binds GTP and GDP. Has intrinsic GTPase activity. Does not hydrolyze ATP. May act as a transducer of stress responses. The protein is Ras-like GTPase YcjX of Shewanella oneidensis (strain ATCC 700550 / JCM 31522 / CIP 106686 / LMG 19005 / NCIMB 14063 / MR-1).